Here is a 154-residue protein sequence, read N- to C-terminus: 6,7-dimethyl-8-ribityllumazine synthase (154 aa).

Residues F22, 56 to 58 (AFE), and 80 to 82 (TVI) each bind 5-amino-6-(D-ribitylamino)uracil. Residue 85–86 (AT) participates in (2S)-2-hydroxy-3-oxobutyl phosphate binding. H88 functions as the Proton donor in the catalytic mechanism. F113 lines the 5-amino-6-(D-ribitylamino)uracil pocket. R127 lines the (2S)-2-hydroxy-3-oxobutyl phosphate pocket.

This sequence belongs to the DMRL synthase family. As to quaternary structure, forms an icosahedral capsid composed of 60 subunits, arranged as a dodecamer of pentamers.

It carries out the reaction (2S)-2-hydroxy-3-oxobutyl phosphate + 5-amino-6-(D-ribitylamino)uracil = 6,7-dimethyl-8-(1-D-ribityl)lumazine + phosphate + 2 H2O + H(+). The protein operates within cofactor biosynthesis; riboflavin biosynthesis; riboflavin from 2-hydroxy-3-oxobutyl phosphate and 5-amino-6-(D-ribitylamino)uracil: step 1/2. Functionally, catalyzes the formation of 6,7-dimethyl-8-ribityllumazine by condensation of 5-amino-6-(D-ribitylamino)uracil with 3,4-dihydroxy-2-butanone 4-phosphate. This is the penultimate step in the biosynthesis of riboflavin. The polypeptide is 6,7-dimethyl-8-ribityllumazine synthase (Bacillus licheniformis (strain ATCC 14580 / DSM 13 / JCM 2505 / CCUG 7422 / NBRC 12200 / NCIMB 9375 / NCTC 10341 / NRRL NRS-1264 / Gibson 46)).